Consider the following 188-residue polypeptide: Ribosome maturation factor RimP (188 aa).

This sequence belongs to the RimP family.

It localises to the cytoplasm. In terms of biological role, required for maturation of 30S ribosomal subunits. The protein is Ribosome maturation factor RimP of Corynebacterium aurimucosum (strain ATCC 700975 / DSM 44827 / CIP 107346 / CN-1) (Corynebacterium nigricans).